Consider the following 271-residue polypeptide: Acetylglutamate kinase (271 aa).

Residues 41 to 42 (GG), Arg-63, and Asn-166 each bind substrate.

The protein belongs to the acetylglutamate kinase family. ArgB subfamily.

The protein localises to the cytoplasm. It carries out the reaction N-acetyl-L-glutamate + ATP = N-acetyl-L-glutamyl 5-phosphate + ADP. It participates in amino-acid biosynthesis; L-arginine biosynthesis; N(2)-acetyl-L-ornithine from L-glutamate: step 2/4. Catalyzes the ATP-dependent phosphorylation of N-acetyl-L-glutamate. This chain is Acetylglutamate kinase, found in Anaeromyxobacter sp. (strain Fw109-5).